A 440-amino-acid polypeptide reads, in one-letter code: Trigger factor (440 aa).

The region spanning 163–248 is the PPIase FKBP-type domain; that stretch reads GDTVVIDFKG…VHEVKTKELP (86 aa).

The protein belongs to the FKBP-type PPIase family. Tig subfamily.

It is found in the cytoplasm. It catalyses the reaction [protein]-peptidylproline (omega=180) = [protein]-peptidylproline (omega=0). In terms of biological role, involved in protein export. Acts as a chaperone by maintaining the newly synthesized protein in an open conformation. Functions as a peptidyl-prolyl cis-trans isomerase. The chain is Trigger factor from Lactiplantibacillus plantarum (strain ATCC BAA-793 / NCIMB 8826 / WCFS1) (Lactobacillus plantarum).